A 362-amino-acid chain; its full sequence is Mitochondrial glycine transporter (362 aa).

3 Solcar repeats span residues 22–108 (PDAT…MRTS), 132–236 (LTAM…FKND), and 269–354 (RSSI…LIKS). The next 6 membrane-spanning stretches (helical) occupy residues 28 to 53 (LLAG…TRLQ), 83 to 109 (GTLP…RTSW), 138 to 163 (LTTG…TRFE), 211 to 234 (GSVA…EAFK), 273 to 299 (INST…KTRL), and 329 to 347 (GLSL…SWCI).

This sequence belongs to the mitochondrial carrier (TC 2.A.29) family. SLC25A38 subfamily.

The protein localises to the mitochondrion inner membrane. The enzyme catalyses glycine(in) = glycine(out). Functionally, mitochondrial glycine transporter that imports glycine into the mitochondrial matrix. Plays an important role in providing glycine for the first enzymatic step in heme biosynthesis, the condensation of glycine with succinyl-CoA to produce 5-aminolevulinate (ALA) in the mitochondrial matrix. The sequence is that of Mitochondrial glycine transporter from Candida albicans (strain SC5314 / ATCC MYA-2876) (Yeast).